The primary structure comprises 370 residues: MTAQSRDPAWTDASPTFQPTMRHDWSLEEIEALFALPFNDLLFRAQQVHRAHFDPNAVQVSTLLSIKTGACPEDCKYCPQSGHYNTGLGKEKLLEIEKVVEQARAAKAAGASRFCMGAAWRSPREKDLRVVTEMVGRVKALGLETCMTLGMVDVDQARRLAEAGLDYYNHNLDTSPDYYGEIITTRTYADRLETLANVREAGMKVCSGGILGMGEAPRDRAALLQQLVRLDPHPESVPINMLVKVPGTPMENVEDMDPLTFIRAIAVARILMPKSHVRLSAGREQMDESTQALAFLAGANSIFYGDTLLTTGNPQVERDRALFDKLGLHPEPSDPHADDAHRDDEQAEIALAHAIQRQRDDALFYDATRG.

Residues 56–283 (NAVQVSTLLS…KSHVRLSAGR (228 aa)) form the Radical SAM core domain. [4Fe-4S] cluster is bound by residues cysteine 71, cysteine 75, and cysteine 78. 4 residues coordinate [2Fe-2S] cluster: cysteine 115, cysteine 146, cysteine 206, and arginine 278. Basic and acidic residues predominate over residues 327–344 (GLHPEPSDPHADDAHRDD). Positions 327-346 (GLHPEPSDPHADDAHRDDEQ) are disordered.

Belongs to the radical SAM superfamily. Biotin synthase family. Homodimer. The cofactor is [4Fe-4S] cluster. [2Fe-2S] cluster serves as cofactor.

The catalysed reaction is (4R,5S)-dethiobiotin + (sulfur carrier)-SH + 2 reduced [2Fe-2S]-[ferredoxin] + 2 S-adenosyl-L-methionine = (sulfur carrier)-H + biotin + 2 5'-deoxyadenosine + 2 L-methionine + 2 oxidized [2Fe-2S]-[ferredoxin]. The protein operates within cofactor biosynthesis; biotin biosynthesis; biotin from 7,8-diaminononanoate: step 2/2. Its function is as follows. Catalyzes the conversion of dethiobiotin (DTB) to biotin by the insertion of a sulfur atom into dethiobiotin via a radical-based mechanism. In Chromohalobacter salexigens (strain ATCC BAA-138 / DSM 3043 / CIP 106854 / NCIMB 13768 / 1H11), this protein is Biotin synthase.